A 92-amino-acid chain; its full sequence is MKLCVTVLSLLVLVAAFCSPALSAPMGSDPPTACCFSYTLRKIPRNFVADYFETSSLCSQPAVVFQTRRGRQVCANPSEPWVQEYMDDLELN.

A signal peptide spans 1 to 23 (MKLCVTVLSLLVLVAAFCSPALS). 2 disulfide bridges follow: Cys34–Cys58 and Cys35–Cys74.

This sequence belongs to the intercrine beta (chemokine CC) family. In terms of assembly, homodimer. Interacts with CCR5.

The protein resides in the secreted. Monokine with inflammatory and chemokinetic properties. The sequence is that of C-C motif chemokine 4 (CCL4) from Canis lupus familiaris (Dog).